Reading from the N-terminus, the 581-residue chain is MTICSCEETINEFEMLTRDAARVQKDTLKKILEINASAEYLQNFGLGGRTDAESYKSCIPLCVHNDIEPYIQRIVDGDTSPVVTGEPITNLSLSSGTTHGKPKFIPFNDELLETTLQIYRTSYAFRNREYPIGQGKALQFVYGSKQVITKGGILATTATTNLYRRQRYKEGMKDIQSQCCSPDEVIFGPDFHQSLYCHLLCGLIYSEEVHSVFSTFAHSLVHAFQTFEEVWEDLCTDIRDGVLSKKVTAPSIREAVSKILKPNPELADSIYKKCIGLSNWYGVIPALWPNAKYVYGIMTGSMEPYLKKLRHYAGNLPLISADYGASEGWVGSNIDPTVPPEQVTYAVLPQVGYFEFIPLEKPIGEETENSASIHYIESDPVGLTEVEVGKIYEVVITNFAGLYRYRLGDVVKIARFHNSTPELQFICRRSLVLSINIDKNTEKDLQLAVEEASKFLEGEKLEVMDFTSFVERSSDPGRYVIFWELSGDASDEVLSSCANALDLAFIDAGYTGSRKIKTIGPLELRILRKGTFKEILDHFLSLGGAVSQFKTPRFVNPSNSKVLQILSRNVTQSYFSTAYGF.

Residue serine 92 coordinates ATP. Serine 95 is a binding site for jasmonate. Residues threonine 115, asparagine 161, and 324–329 (GASEGW) contribute to the ATP site. 159-163 (TTNLY) provides a ligand contact to an L-alpha-amino acid. Jasmonate is bound by residues 321–324 (ADYG) and serine 326. Residue 534 to 538 (EILDH) participates in an L-alpha-amino acid binding. Residue lysine 561 coordinates ATP.

The protein belongs to the IAA-amido conjugating enzyme family. Expressed in green shoots, roots and flowers.

It carries out the reaction a jasmonate + an L-alpha-amino acid + ATP = a jasmonyl-L-amino acid + AMP + diphosphate + H(+). In terms of biological role, catalyzes the synthesis of jasmonate-amino acid conjugates by adenylation. Catalyzes the conjugation of jasmonate (JA) to Ile when expressed in a heterologous system (E.coli). Catalyzes in vitro the conjugation of jasmonate (JA) to Ile, Phe, Cys, Leu, Met, Ala, Val and Trp. Involved in the production of JA-Ile in response to infection by the rice blast fungus Magnaporthe oryzae. Required for the accumulation of the flavonoid phytoalexin sakuranetin in response to infection by the rice blast fungus. Involved in herbivory-induced JA-Ile accumulation. Involved in the production of JA-Ile in response to wounding. Required for modulation of light and JA signaling in photomorphogenesis. Required for normal seed development. Required for optimal flower opening and closing and anther dehiscence. May catalyze the synthesis of indole-3-acetic acid (IAA)-amino acid conjugates, providing a mechanism for the plant to cope with the presence of excess auxin. The polypeptide is Jasmonoyl--L-amino acid synthetase GH3.5 (Oryza sativa subsp. japonica (Rice)).